The sequence spans 545 residues: Chaperonin GroEL 1 (545 aa).

Residues 29-32 (TLGP), 86-90 (DGTTT), glycine 413, 477-479 (NAA), and aspartate 493 contribute to the ATP site.

This sequence belongs to the chaperonin (HSP60) family. Forms a cylinder of 14 subunits composed of two heptameric rings stacked back-to-back. Interacts with the co-chaperonin GroES.

The protein localises to the cytoplasm. It carries out the reaction ATP + H2O + a folded polypeptide = ADP + phosphate + an unfolded polypeptide.. Together with its co-chaperonin GroES, plays an essential role in assisting protein folding. The GroEL-GroES system forms a nano-cage that allows encapsulation of the non-native substrate proteins and provides a physical environment optimized to promote and accelerate protein folding. This Arthrobacter sp. (strain FB24) protein is Chaperonin GroEL 1.